The following is a 245-amino-acid chain: 1-(5-phosphoribosyl)-5-[(5-phosphoribosylamino)methylideneamino] imidazole-4-carboxamide isomerase (245 aa).

The active-site Proton acceptor is the D8. D130 acts as the Proton donor in catalysis.

The protein belongs to the HisA/HisF family.

The protein localises to the cytoplasm. It carries out the reaction 1-(5-phospho-beta-D-ribosyl)-5-[(5-phospho-beta-D-ribosylamino)methylideneamino]imidazole-4-carboxamide = 5-[(5-phospho-1-deoxy-D-ribulos-1-ylimino)methylamino]-1-(5-phospho-beta-D-ribosyl)imidazole-4-carboxamide. It functions in the pathway amino-acid biosynthesis; L-histidine biosynthesis; L-histidine from 5-phospho-alpha-D-ribose 1-diphosphate: step 4/9. The sequence is that of 1-(5-phosphoribosyl)-5-[(5-phosphoribosylamino)methylideneamino] imidazole-4-carboxamide isomerase from Pseudomonas fluorescens (strain Pf0-1).